The chain runs to 448 residues: Argininosuccinate synthase (448 aa).

ATP contacts are provided by residues 17 to 25 (AFSGGLDTS) and alanine 43. Residue tyrosine 99 participates in L-citrulline binding. Residues glycine 129 and threonine 131 each contribute to the ATP site. Positions 131, 135, and 136 each coordinate L-aspartate. Residue asparagine 135 participates in L-citrulline binding. Aspartate 136 provides a ligand contact to ATP. Residues arginine 139 and serine 192 each coordinate L-citrulline. ATP is bound at residue aspartate 194. The L-citrulline site is built by threonine 201, glutamate 203, and glutamate 280.

Belongs to the argininosuccinate synthase family. Type 2 subfamily. As to quaternary structure, homotetramer.

It is found in the cytoplasm. The enzyme catalyses L-citrulline + L-aspartate + ATP = 2-(N(omega)-L-arginino)succinate + AMP + diphosphate + H(+). It functions in the pathway amino-acid biosynthesis; L-arginine biosynthesis; L-arginine from L-ornithine and carbamoyl phosphate: step 2/3. The polypeptide is Argininosuccinate synthase (Pectobacterium atrosepticum (strain SCRI 1043 / ATCC BAA-672) (Erwinia carotovora subsp. atroseptica)).